A 32-amino-acid polypeptide reads, in one-letter code: U3-ctenitoxin-Pk1a (32 aa).

3 disulfides stabilise this stretch: Cys3–Cys17, Cys10–Cys21, and Cys16–Cys30.

This sequence belongs to the neurotoxin 17 (21C2) family. Expressed by the venom gland.

Its subcellular location is the secreted. Its function is as follows. May act as a neurotoxin. This is U3-ctenitoxin-Pk1a from Phoneutria keyserlingi (Brazilian wandering spider).